The following is a 134-amino-acid chain: Small ribosomal subunit protein bS6 (134 aa).

The interval 97–134 (TDVSPIKASEGREDRRSAPQREERNHDNSDEVSEESED) is disordered. Residues 105-125 (SEGREDRRSAPQREERNHDNS) are compositionally biased toward basic and acidic residues.

Belongs to the bacterial ribosomal protein bS6 family.

In terms of biological role, binds together with bS18 to 16S ribosomal RNA. In Marinomonas sp. (strain MWYL1), this protein is Small ribosomal subunit protein bS6.